An 87-amino-acid polypeptide reads, in one-letter code: Phosphocarrier protein HPr (87 aa).

Positions 1-87 (MEKIFKVTSD…ETMKNEGLGE (87 aa)) constitute an HPr domain. H14 (pros-phosphohistidine intermediate; alternate) is an active-site residue. Tele-phosphohistidine; alternate is present on H14. A Phosphoserine; by HPrK/P modification is found at S45.

It belongs to the HPr family. The form phosphorylated at the tele nitrogen (N(epsilon)2), instead of the expected pros nitrogen (N(delta)1), of His-14 is not able to transfer its phosphoryl group to the B.subtilis EIIA-Glc domain. This form may be inactive in PTS-catalyzed sugar transport or target an as yet unknown acceptor molecule in an alternative metabolic process.

The protein localises to the cytoplasm. Phosphorylation on Ser-45 inhibits the phosphoryl transfer from enzyme I to HPr. Functionally, general (non sugar-specific) component of the phosphoenolpyruvate-dependent sugar phosphotransferase system (sugar PTS). This major carbohydrate active-transport system catalyzes the phosphorylation of incoming sugar substrates concomitantly with their translocation across the cell membrane. The phosphoryl group from phosphoenolpyruvate (PEP) is transferred to the phosphoryl carrier protein HPr by enzyme I. Phospho-HPr then transfers it to the PTS EIIA domain. P-Ser-HPr interacts with the catabolite control protein A (CcpA), forming a complex that binds to DNA at the catabolite response elements cre, operator sites preceding a large number of catabolite-regulated genes. Thus, P-Ser-HPr is a corepressor in carbon catabolite repression (CCR), a mechanism that allows bacteria to coordinate and optimize the utilization of available carbon sources. P-Ser-HPr mediates glucose catabolite repression of cry4A toxin expression. This chain is Phosphocarrier protein HPr (ptsH), found in Bacillus thuringiensis subsp. israelensis.